A 112-amino-acid polypeptide reads, in one-letter code: MRKVAPFLLLTYVVLAHYANYLILLLPLSVISKAICLTLSSFVFSSAALLVILVSLATWNTTRKPDGLNHQVTQGKKSHTQSQQTGPTTLTSDRILDDFPDDYEKFRWRVPF.

The disordered stretch occupies residues 64-93 (KPDGLNHQVTQGKKSHTQSQQTGPTTLTSD). Residues 70–92 (HQVTQGKKSHTQSQQTGPTTLTS) show a composition bias toward polar residues.

The polypeptide is Protein 4.2 (Escherichia phage T7 (Bacteriophage T7)).